We begin with the raw amino-acid sequence, 222 residues long: MAAAGGGGAAAGRTYSFKVVLLGEGCVGKTSLVLRYCENKFNDKHITTLQASFLTKKLNIGGKRVNLAIWDTAGQERFHALGPIYYRDSNGAILVYDITDEDSFQKVKNWVKELRKMLGNEICLCIVGNKVDLEKERHVSIQEAESYAESVGAKHYHTSAKQNKGIEELFLDLCKRMIETAQVDERAKGNGSSQPGAARRGVQIIDDEPQAQSVGGGCCSSG.

At alanine 2 the chain carries N-acetylalanine. Positions 25, 28, 29, 30, 31, 42, 43, 45, 47, and 48 each coordinate GTP. Residue threonine 30 participates in Mg(2+) binding. The Switch 1 motif lies at 40–53 (KFNDKHITTLQASF). Mg(2+)-binding residues include threonine 48 and aspartate 71. Positions 73-91 (AGQERFHALGPIYYRDSNG) match the Switch 2 motif. GTP contacts are provided by glycine 74, asparagine 129, lysine 130, aspartate 132, alanine 160, and lysine 161. 2 S-geranylgeranyl cysteine lipidation sites follow: cysteine 218 and cysteine 219. Cysteine 219 bears the Cysteine methyl ester mark. Residues 220–222 (SSG) constitute a propeptide, removed in mature form.

This sequence belongs to the small GTPase superfamily. Rab family. Interacts with the cytoplasmic tail of integrins ITGA1, ITGA2, ITGA5, ITGA6, ITGA11 and ITGB1; this interaction is dependent upon its GDP/GTP cycle. Interacts with RABGEF1 (via VPS9 domain). Interacts with ANKRD27. Interacts (in GTP-bound form) with VAMP8 in response to starvation; the interaction probably regulates VAMP8 endolysosomal trafficking. Interacts (active GTP-bound form) with TMED10; the interaction is indirect and regulates TMED10 abundance and localization at the Golgi. The cofactor is Mg(2+).

The protein resides in the endoplasmic reticulum membrane. It localises to the golgi apparatus. The protein localises to the trans-Golgi network. Its subcellular location is the golgi apparatus membrane. It is found in the early endosome membrane. The protein resides in the cytoplasmic vesicle membrane. It localises to the cleavage furrow. The protein localises to the cell projection. Its subcellular location is the neuron projection. The enzyme catalyses GTP + H2O = GDP + phosphate + H(+). Its activity is regulated as follows. Regulated by guanine nucleotide exchange factors (GEFs) including ANKRD27 and RABGEF1, which promote the exchange of bound GDP for free GTP. Regulated by GTPase activating proteins (GAPs) which increase the GTP hydrolysis activity. Inhibited by GDP dissociation inhibitors (GDIs). The small GTPases Rab are key regulators of intracellular membrane trafficking, from the formation of transport vesicles to their fusion with membranes. Rabs cycle between an inactive GDP-bound form and an active GTP-bound form that is able to recruit to membranes different sets of downstream effectors directly responsible for vesicle formation, movement, tethering and fusion. RAB21 is involved in membrane trafficking control. Regulates integrin internalization and recycling, but does not influence the traffic of endosomally translocated receptors in general. As a result, may regulate cell adhesion and migration. During the mitosis of adherent cells, controls the endosomal trafficking of integrins which is required for the successful completion of cytokinesis. Involved in neurite growth. Following SBF2/MTMT13-mediated activation in response to starvation-induced autophagy, binds to and regulates SNARE protein VAMP8 endolysosomal transport required for SNARE-mediated autophagosome-lysosome fusion. Modulates protein levels of the cargo receptors TMED2 and TMED10, and required for appropriate Golgi localization of TMED10. This is Ras-related protein Rab-21 (RAB21) from Bos taurus (Bovine).